The primary structure comprises 294 residues: Cytidine deaminase (294 aa).

CMP/dCMP-type deaminase domains lie at 48 to 168 (DEDA…FGPK) and 186 to 294 (LTGD…VLLA). Residue 89–91 (NME) participates in substrate binding. Residue His-102 coordinates Zn(2+). The Proton donor role is filled by Glu-104. Residues Cys-129 and Cys-132 each coordinate Zn(2+).

This sequence belongs to the cytidine and deoxycytidylate deaminase family. As to quaternary structure, homodimer. Zn(2+) is required as a cofactor.

The catalysed reaction is cytidine + H2O + H(+) = uridine + NH4(+). It carries out the reaction 2'-deoxycytidine + H2O + H(+) = 2'-deoxyuridine + NH4(+). Its function is as follows. This enzyme scavenges exogenous and endogenous cytidine and 2'-deoxycytidine for UMP synthesis. The sequence is that of Cytidine deaminase from Escherichia coli (strain ATCC 8739 / DSM 1576 / NBRC 3972 / NCIMB 8545 / WDCM 00012 / Crooks).